We begin with the raw amino-acid sequence, 253 residues long: Sulfate transporter CysZ (253 aa).

4 consecutive transmembrane segments (helical) span residues 31 to 51 (FVIL…WWLF), 75 to 95 (LLWP…FSTI), 151 to 171 (IVLL…PVLW), and 222 to 242 (IPLL…AMWV).

This sequence belongs to the CysZ family.

It localises to the cell inner membrane. Its function is as follows. High affinity, high specificity proton-dependent sulfate transporter, which mediates sulfate uptake. Provides the sulfur source for the cysteine synthesis pathway. This is Sulfate transporter CysZ from Escherichia coli O7:K1 (strain IAI39 / ExPEC).